A 63-amino-acid polypeptide reads, in one-letter code: Small ribosomal subunit protein bS21 (63 aa).

The protein belongs to the bacterial ribosomal protein bS21 family.

The protein is Small ribosomal subunit protein bS21 of Porphyromonas gingivalis (strain ATCC 33277 / DSM 20709 / CIP 103683 / JCM 12257 / NCTC 11834 / 2561).